The following is a 316-amino-acid chain: Pyridoxal 5'-phosphate synthase subunit PdxS (316 aa).

Asp44 provides a ligand contact to D-ribose 5-phosphate. Lys101 acts as the Schiff-base intermediate with D-ribose 5-phosphate in catalysis. Gly173 lines the D-ribose 5-phosphate pocket. Residue Lys185 participates in D-glyceraldehyde 3-phosphate binding. Residues Gly234 and 255-256 (GS) contribute to the D-ribose 5-phosphate site.

Belongs to the PdxS/SNZ family. In the presence of PdxT, forms a dodecamer of heterodimers.

It catalyses the reaction aldehydo-D-ribose 5-phosphate + D-glyceraldehyde 3-phosphate + L-glutamine = pyridoxal 5'-phosphate + L-glutamate + phosphate + 3 H2O + H(+). It functions in the pathway cofactor biosynthesis; pyridoxal 5'-phosphate biosynthesis. Catalyzes the formation of pyridoxal 5'-phosphate from ribose 5-phosphate (RBP), glyceraldehyde 3-phosphate (G3P) and ammonia. The ammonia is provided by the PdxT subunit. Can also use ribulose 5-phosphate and dihydroxyacetone phosphate as substrates, resulting from enzyme-catalyzed isomerization of RBP and G3P, respectively. The polypeptide is Pyridoxal 5'-phosphate synthase subunit PdxS (Sulfurisphaera tokodaii (strain DSM 16993 / JCM 10545 / NBRC 100140 / 7) (Sulfolobus tokodaii)).